Reading from the N-terminus, the 327-residue chain is Endo-1,4-beta-xylanase A (327 aa).

One can recognise a GH10 domain in the interval 1–323; the sequence is AASGLEAAMK…KPSYTSTLNT (323 aa). A disulfide bond links Cys81 and Cys123. The N-linked (GlcNAc...) asparagine glycan is linked to Asn101. Glu131 functions as the Proton donor in the catalytic mechanism. Glu245 serves as the catalytic Nucleophile. Cys273 and Cys279 form a disulfide bridge.

The protein belongs to the glycosyl hydrolase 10 (cellulase F) family. In terms of assembly, monomer.

The protein localises to the secreted. Its subcellular location is the extracellular space. It catalyses the reaction Endohydrolysis of (1-&gt;4)-beta-D-xylosidic linkages in xylans.. It functions in the pathway glycan degradation; xylan degradation. Catalyzes the hydrolysis of the internal glycosidic bonds in heteroxylans, releasing mainly xylobiose and xylotriose. Most active on oat-spelt xylan. In Fusarium oxysporum f. sp. lycopersici (strain 4287 / CBS 123668 / FGSC 9935 / NRRL 34936) (Fusarium vascular wilt of tomato), this protein is Endo-1,4-beta-xylanase A.